Consider the following 419-residue polypeptide: Gamma-glutamyl phosphate reductase (419 aa).

The protein belongs to the gamma-glutamyl phosphate reductase family.

It is found in the cytoplasm. It carries out the reaction L-glutamate 5-semialdehyde + phosphate + NADP(+) = L-glutamyl 5-phosphate + NADPH + H(+). Its pathway is amino-acid biosynthesis; L-proline biosynthesis; L-glutamate 5-semialdehyde from L-glutamate: step 2/2. Catalyzes the NADPH-dependent reduction of L-glutamate 5-phosphate into L-glutamate 5-semialdehyde and phosphate. The product spontaneously undergoes cyclization to form 1-pyrroline-5-carboxylate. The sequence is that of Gamma-glutamyl phosphate reductase from Azobacteroides pseudotrichonymphae genomovar. CFP2.